Here is a 622-residue protein sequence, read N- to C-terminus: 1-deoxy-D-xylulose-5-phosphate synthase (622 aa).

Residues H80 and G121–S123 each bind thiamine diphosphate. D152 is a Mg(2+) binding site. Residues G153–A154, N181, Y288, and E370 each bind thiamine diphosphate. Residue N181 coordinates Mg(2+).

Belongs to the transketolase family. DXPS subfamily. As to quaternary structure, homodimer. The cofactor is Mg(2+). Requires thiamine diphosphate as cofactor.

It carries out the reaction D-glyceraldehyde 3-phosphate + pyruvate + H(+) = 1-deoxy-D-xylulose 5-phosphate + CO2. It participates in metabolic intermediate biosynthesis; 1-deoxy-D-xylulose 5-phosphate biosynthesis; 1-deoxy-D-xylulose 5-phosphate from D-glyceraldehyde 3-phosphate and pyruvate: step 1/1. Its function is as follows. Catalyzes the acyloin condensation reaction between C atoms 2 and 3 of pyruvate and glyceraldehyde 3-phosphate to yield 1-deoxy-D-xylulose-5-phosphate (DXP). This chain is 1-deoxy-D-xylulose-5-phosphate synthase, found in Shewanella denitrificans (strain OS217 / ATCC BAA-1090 / DSM 15013).